The sequence spans 267 residues: NAD kinase (267 aa).

Residue D45 is the Proton acceptor of the active site. Residues D45–G46, N123–E124, R149, D151, A186, and N226 contribute to the NAD(+) site.

It belongs to the NAD kinase family. A divalent metal cation serves as cofactor.

Its subcellular location is the cytoplasm. It catalyses the reaction NAD(+) + ATP = ADP + NADP(+) + H(+). Functionally, involved in the regulation of the intracellular balance of NAD and NADP, and is a key enzyme in the biosynthesis of NADP. Catalyzes specifically the phosphorylation on 2'-hydroxyl of the adenosine moiety of NAD to yield NADP. This Shouchella clausii (strain KSM-K16) (Alkalihalobacillus clausii) protein is NAD kinase.